The following is a 1332-amino-acid chain: Misshapen-like kinase 1 (1332 aa).

Positions 25–289 (FELVEVVGNG…TEQLLKFPFI (265 aa)) constitute a Protein kinase domain. Residues 31 to 39 (VGNGTYGQV) and Lys-54 contribute to the ATP site. Asp-153 acts as the Proton acceptor in catalysis. Disordered regions lie at residues 300–347 (IQLK…NVPG), 363–383 (KSNS…QRDP), and 395–887 (QRRI…GTMV). Residues 317–333 (EETEYEYSGSEEEDDSH) are compositionally biased toward acidic residues. A phosphoserine mark is found at Ser-324 and Ser-326. A compositionally biased stretch (low complexity) spans 371-380 (QQQQLQQQQQ). Residues 396–466 (RRIEEQKEER…EEQRQSERLQ (71 aa)) are compositionally biased toward basic and acidic residues. Over residues 479–497 (LQQQQQQQQLQKQQQQQLL) the composition is skewed to low complexity. An omega-N-methylarginine mark is found at Arg-501 and Arg-509. The segment covering 518–528 (AWAREVEERTR) has biased composition (basic and acidic residues). Residues 547–561 (PEPPIPQASPGPPGP) are compositionally biased toward pro residues. Polar residues predominate over residues 598-608 (RSQSLQDQPTR). Ser-641 is modified (phosphoserine). The segment covering 670–682 (QRTSSIATALNTS) has biased composition (polar residues). Residue Ser-701 is modified to Phosphoserine. The segment covering 716 to 729 (PKPPGPPAQPPGPP) has biased composition (pro residues). Basic and acidic residues predominate over residues 736–748 (DLRRSDPGWERSD). 5 positions are modified to phosphoserine: Ser-754, Ser-763, Ser-777, Ser-778, and Ser-782. Basic and acidic residues predominate over residues 804 to 821 (LLKERTLDEAPRPPKKAM). Residues 828–841 (EEVESSEDDEEEGE) are compositionally biased toward acidic residues. Positions 866 to 1332 (MVVHDVEEIT…TLNRNCIMNW (467 aa)) are mediates interaction with RAP2A. Thr-891 is subject to Phosphothreonine. Residues 902–943 (DSNGYTNLPDVVQPSHSPTENSKGQSPPSKDGSGDYQSRGLV) are disordered. Residues 915–929 (PSHSPTENSKGQSPP) show a composition bias toward polar residues. A CNH domain is found at 1019 to 1306 (NSEILCAALW…KFLCERNDKV (288 aa)).

It belongs to the protein kinase superfamily. STE Ser/Thr protein kinase family. STE20 subfamily. As to quaternary structure, interacts with TANC1. Interacts with RAP2A. Isoform 4 interacts with NCK1. The cofactor is Mg(2+). Autophosphorylated. Expressed in the brain, isoform 2 is more abundant than isoform 1. Isoform 3 is ubiquitously expressed. Isoform 1 is most abundant in the skeletal muscle. Isoform 4 is ubiquitously expressed with relative high levels in brain, skeletal muscle, pancreas and testis.

It localises to the cytoplasm. The protein resides in the postsynaptic density. Its subcellular location is the cell projection. It is found in the axon. The protein localises to the dendrite. It localises to the golgi apparatus. The catalysed reaction is L-seryl-[protein] + ATP = O-phospho-L-seryl-[protein] + ADP + H(+). The enzyme catalyses L-threonyl-[protein] + ATP = O-phospho-L-threonyl-[protein] + ADP + H(+). Its function is as follows. Serine/threonine kinase which acts as a negative regulator of Ras-related Rap2-mediated signal transduction to control neuronal structure and AMPA receptor trafficking. Required for normal synaptic density, dendrite complexity, as well as surface AMPA receptor expression in hippocampal neurons. Can activate the JNK and MAPK14/p38 pathways and mediates stimulation of the stress-activated protein kinase MAPK14/p38 MAPK downstream of the Raf/ERK pathway. Phosphorylates TANC1 upon stimulation by RAP2A, MBP and SMAD1. Has an essential function in negative selection of thymocytes, perhaps by coupling NCK1 to activation of JNK1. Activator of the Hippo signaling pathway which plays a pivotal role in organ size control and tumor suppression by restricting proliferation and promoting apoptosis. MAP4Ks act in parallel to and are partially redundant with STK3/MST2 and STK4/MST2 in the phosphorylation and activation of LATS1/2, and establish MAP4Ks as components of the expanded Hippo pathway. Functionally, isoform 4 can activate the JNK pathway. Involved in the regulation of actin cytoskeleton reorganization, cell-matrix adhesion, cell-cell adhesion and cell migration. The sequence is that of Misshapen-like kinase 1 from Homo sapiens (Human).